We begin with the raw amino-acid sequence, 318 residues long: NADH-ubiquinone oxidoreductase chain 1 (318 aa).

8 helical membrane-spanning segments follow: residues 2–22 (FMIN…FLTL), 69–89 (LMFI…WIPL), 100–120 (LGVL…LWSG), 146–166 (LAII…AMLI), 171–191 (YMWL…STLA), 223–243 (FFLA…ILFF), 253–273 (ELYT…FLWI), and 294–314 (LPLT…TASI).

It belongs to the complex I subunit 1 family. As to quaternary structure, core subunit of respiratory chain NADH dehydrogenase (Complex I) which is composed of 45 different subunits.

It localises to the mitochondrion inner membrane. It catalyses the reaction a ubiquinone + NADH + 5 H(+)(in) = a ubiquinol + NAD(+) + 4 H(+)(out). Its function is as follows. Core subunit of the mitochondrial membrane respiratory chain NADH dehydrogenase (Complex I) which catalyzes electron transfer from NADH through the respiratory chain, using ubiquinone as an electron acceptor. Essential for the catalytic activity and assembly of complex I. The sequence is that of NADH-ubiquinone oxidoreductase chain 1 (MT-ND1) from Felis catus (Cat).